Consider the following 286-residue polypeptide: Pantothenate synthetase (286 aa).

30–37 (MGALHEGH) contributes to the ATP binding site. The Proton donor role is filled by H37. Q61 lines the (R)-pantoate pocket. Residue Q61 participates in beta-alanine binding. Residue 147-150 (GEKD) participates in ATP binding. Q153 serves as a coordination point for (R)-pantoate. ATP is bound by residues L176 and 184–187 (HSSR).

This sequence belongs to the pantothenate synthetase family. In terms of assembly, homodimer.

Its subcellular location is the cytoplasm. The catalysed reaction is (R)-pantoate + beta-alanine + ATP = (R)-pantothenate + AMP + diphosphate + H(+). The protein operates within cofactor biosynthesis; (R)-pantothenate biosynthesis; (R)-pantothenate from (R)-pantoate and beta-alanine: step 1/1. In terms of biological role, catalyzes the condensation of pantoate with beta-alanine in an ATP-dependent reaction via a pantoyl-adenylate intermediate. The polypeptide is Pantothenate synthetase (Bartonella tribocorum (strain CIP 105476 / IBS 506)).